Here is a 1004-residue protein sequence, read N- to C-terminus: Unconventional myosin-Id (1004 aa).

Residues 9–695 (FGKADFVLLD…TIFSLEEQRA (687 aa)) enclose the Myosin motor domain. 102 to 109 (GESGAGKT) contacts ATP. Residues 572–594 (MISLVEKLASKEPYYVRCIKPND) are actin-binding. 2 IQ domains span residues 699 to 719 (KRIV…MRYR) and 721 to 741 (MRAA…SYIR). Residues 812–1003 (GQRADLGLQR…RSGYILSVPG (192 aa)) enclose the TH1 domain.

It belongs to the TRAFAC class myosin-kinesin ATPase superfamily. Myosin family. As to quaternary structure, interacts (via the two IQ motifs) with calmodulin. Interacts with F-actin.

Its subcellular location is the cytoplasm. The protein localises to the perikaryon. The protein resides in the cell projection. It localises to the dendrite. It is found in the early endosome. Its subcellular location is the cell cortex. Its function is as follows. Unconventional myosin that functions as actin-based motor protein with ATPase activity. Plays a role in the formation of Kupffer's vesicle, an organ that functions as a left-right organizer during embryogenesis. Plays a role in vesicular trafficking events that are required for normal lumen expansion of Kupffer's vesicle. Required for normal orientation of cilia in Kupffer's vesicle, and thus for normal, unidirectional circular flow and normal angular flow velocity, which then mediates asymmetric gene expression and left-right asymmetric development. Plays a role in endosomal protein trafficking, and especially in the transfer of cargo proteins from early to recycling endosomes. Required for normal planar cell polarity in ciliated cells, for normal rotational polarity of cilia, and for coordinated, unidirectional ciliary movement. This chain is Unconventional myosin-Id (myo1d), found in Danio rerio (Zebrafish).